Reading from the N-terminus, the 655-residue chain is Acetyl-coenzyme A synthetase (655 aa).

CoA is bound by residues 196 to 199 and threonine 316; that span reads RGGK. ATP is bound by residues 392–394, 416–421, aspartate 507, and arginine 522; these read GEP and DTWWQT. Position 530 (serine 530) interacts with CoA. Residue arginine 533 participates in ATP binding. Positions 544 and 549 each coordinate Mg(2+). At lysine 619 the chain carries N6-acetyllysine.

This sequence belongs to the ATP-dependent AMP-binding enzyme family. Mg(2+) is required as a cofactor. Acetylated. Deacetylation by the SIR2-homolog deacetylase activates the enzyme.

The enzyme catalyses acetate + ATP + CoA = acetyl-CoA + AMP + diphosphate. In terms of biological role, catalyzes the conversion of acetate into acetyl-CoA (AcCoA), an essential intermediate at the junction of anabolic and catabolic pathways. AcsA undergoes a two-step reaction. In the first half reaction, AcsA combines acetate with ATP to form acetyl-adenylate (AcAMP) intermediate. In the second half reaction, it can then transfer the acetyl group from AcAMP to the sulfhydryl group of CoA, forming the product AcCoA. This chain is Acetyl-coenzyme A synthetase, found in Thiobacillus denitrificans (strain ATCC 25259 / T1).